A 91-amino-acid chain; its full sequence is MVTLVIALYFIGMLMLFINRHFLMMILLSIESMYMSLLLMLCIYFCFFNLLSIFVFLISIVCEAGLALSLLVMMSFFYGNELMMSMNLIKC.

3 helical membrane passes run 8 to 28 (LYFI…MILL), 38 to 58 (LLML…VFLI), and 59 to 79 (SIVC…FFYG).

The protein belongs to the complex I subunit 4L family.

The protein resides in the mitochondrion membrane. The enzyme catalyses a ubiquinone + NADH + 5 H(+)(in) = a ubiquinol + NAD(+) + 4 H(+)(out). Functionally, core subunit of the mitochondrial membrane respiratory chain NADH dehydrogenase (Complex I) that is believed to belong to the minimal assembly required for catalysis. Complex I functions in the transfer of electrons from NADH to the respiratory chain. The immediate electron acceptor for the enzyme is believed to be ubiquinone. This is NADH-ubiquinone oxidoreductase chain 4L (ND4L) from Rhipicephalus sanguineus (Brown dog tick).